The primary structure comprises 582 residues: DnaJ protein ERDJ3A (582 aa).

The N-terminal stretch at 1-25 is a signal peptide; sequence MGIPVRSLLVASIVLSSIALHVAAA. Positions 29–93 constitute a J domain; sequence DPYKVLGVDK…EKRKNYDLYG (65 aa). N-linked (GlcNAc...) asparagine glycosylation occurs at Asn61. Positions 178–201 are disordered; it reads GGSQHTGSAGKARRGTKSSGHDSS. Residues 407-437 are a coiled coil; the sequence is VKDLRSGIKELKNLLENFEKKNKKLASNQAK.

As to quaternary structure, interacts with BIP5.

Its subcellular location is the endoplasmic reticulum. The protein localises to the vacuole. Functionally, may play a role in protein folding in the endoplasmic reticulum. The sequence is that of DnaJ protein ERDJ3A from Oryza sativa subsp. japonica (Rice).